The chain runs to 298 residues: Homoserine kinase (298 aa).

79–89 (PIARGLGSSGA) lines the ATP pocket.

The protein belongs to the GHMP kinase family. Homoserine kinase subfamily.

The protein resides in the cytoplasm. The catalysed reaction is L-homoserine + ATP = O-phospho-L-homoserine + ADP + H(+). The protein operates within amino-acid biosynthesis; L-threonine biosynthesis; L-threonine from L-aspartate: step 4/5. Its function is as follows. Catalyzes the ATP-dependent phosphorylation of L-homoserine to L-homoserine phosphate. This is Homoserine kinase from Pyrobaculum islandicum (strain DSM 4184 / JCM 9189 / GEO3).